The following is a 295-amino-acid chain: G1/S-specific cyclin-D1 (295 aa).

The Cyclin N-terminal domain occupies 28-152 (LRAMLKAEET…LLVNKLKWNL (125 aa)). Residues 262–295 (AQQNMDPKAAEEEEEEEEEVDLACTPTDVRDVDI) form a disordered region. Residue Lys-269 forms a Glycyl lysine isopeptide (Lys-Gly) (interchain with G-Cter in ubiquitin) linkage. The segment covering 272-282 (EEEEEEEEEVD) has biased composition (acidic residues). Phosphothreonine is present on Thr-286.

Belongs to the cyclin family. Cyclin D subfamily. Interacts with either CDK4 or CDK6 protein kinase to form a serine/threonine kinase holoenzyme complex. The cyclin subunit imparts substrate specificity to the complex. Component of the ternary complex CCND1/CDK4/CDKN1B required for nuclear translocation and modulation of CDK4-mediated kinase activity. Interacts directly with CDKN1B. Can form similar complexes with either CDKN1A or CDKN2A. Interacts with UHRF2; the interaction ubiquitinates CCND1 and appears to occur independently of phosphorylation. Interacts with USP2. Interacts (via cyclin N-terminal domain) with INSM1 (via N-terminal region); the interaction competes with the binding of CCND1 to CDK4 during cell cycle progression and inhibits CDK4 activity. Interacts with CDK4; the interaction is prevented with the binding of CCND1 to INSM1 during cell cycle progression. In terms of processing, phosphorylation at Thr-286 by MAP kinases is required for ubiquitination and degradation by the DCX(AMBRA1) complex. It also plays an essential role for recognition by the FBXO31 component of SCF (SKP1-cullin-F-box) protein ligase complex following DNA damage. Ubiquitinated at Lys-269 by the DCX(AMBRA1) complex during the transition from G1 to S cell phase, leading to its degradation: ubiquitination is dependent on Thr-286 phosphorylation. The DCX(AMBRA1) complex represents the major regulator of CCND1 stability during the G1/S transition. Also ubiquitinated by the SCF(FBXO4) and Cul7-RING(FBXW8) ubiquitin-protein ligase complexes. Following DNA damage it is ubiquitinated by the SCF(FBXO31) protein ligase complex. SCF(FBXO31) ubiquitination is dependent on Thr-286 phosphorylation. Ubiquitinated also by UHRF2 apparently in a phosphorylation-independent manner. Ubiquitination leads to its degradation and G1 arrest. Deubiquitinated by USP2; leading to its stabilization.

The protein resides in the nucleus. It localises to the cytoplasm. It is found in the nucleus membrane. Functionally, regulatory component of the cyclin D1-CDK4 (DC) complex that phosphorylates and inhibits members of the retinoblastoma (RB) protein family including RB1 and regulates the cell-cycle during G(1)/S transition. Phosphorylation of RB1 allows dissociation of the transcription factor E2F from the RB/E2F complex and the subsequent transcription of E2F target genes which are responsible for the progression through the G(1) phase. Hypophosphorylates RB1 in early G(1) phase. Cyclin D-CDK4 complexes are major integrators of various mitogenenic and antimitogenic signals. Also a substrate for SMAD3, phosphorylating SMAD3 in a cell-cycle-dependent manner and repressing its transcriptional activity. Component of the ternary complex, cyclin D1/CDK4/CDKN1B, required for nuclear translocation and activity of the cyclin D-CDK4 complex. Exhibits transcriptional corepressor activity with INSM1 on the NEUROD1 and INS promoters in a cell cycle-independent manner. This chain is G1/S-specific cyclin-D1 (CCND1), found in Pongo abelii (Sumatran orangutan).